The chain runs to 505 residues: MSSGQQQPPPPRRVTNVGSLLLTPQENESLFTFLGKKCVTMSSAVVQLYAADRNCMWSKKCSGVACLVKDNPQRSYFLRIFDIKDGKLLWEQELYNNFVYNSPRGYFHTFAGDTCQVALNFANEEEAKKFRKAVTDLLGRRQRKSEKRRDPPNGPNLPMATVDIKNPEITTNRFYGPQINNISHTKEKKKGKAKKKRLTKADIGTPSNFQHIGHVGWDPNTGFDLNNLDPELKNLFDMCGISEAQLKDRETSKVIYDFIEKTGGVEAVKNELRRQAPPPPPPSRGGPPPPPPPPHSSGPPPPPARGRGAPPPPPSRAPTAAPPPPPPSRPGVGAPPPPPNRMYPPPLPALPSSAPSGPPPPPPPLSVSGSVAPPPPPPPPPPPGPPPPPGLPSDGDHQVPTPAGSKAALLDQIREGAQLKKVEQNSRPVSCSGRDALLDQIRQGIQLKSVTDAPESTPPAPAPTSGIVGALMEVMQKRSKAIHSSDEDEDEDDDEDFEDDDEWED.

Ser2 carries the N-acetylserine modification. The region spanning 34–141 is the WH1 domain; the sequence is LGKKCVTMSS…KAVTDLLGRR (108 aa). 2 disordered regions span residues 138-163 and 185-205; these read LGRR…ATVD and TKEK…DIGT. The span at 186 to 198 shows a compositional bias: basic residues; the sequence is KEKKKGKAKKKRL. In terms of domain architecture, CRIB spans 203 to 216; sequence IGTPSNFQHIGHVG. Ser242 carries the phosphoserine; by TNK2 modification. Phosphotyrosine; by FAK1 and TNK2 is present on Tyr256. Disordered stretches follow at residues 266 to 406, 449 to 468, and 477 to 505; these read EAVK…AGSK, SVTD…SGIV, and KRSK…EWED. Composition is skewed to pro residues over residues 276–349, 356–365, and 372–391; these read APPP…PLPA, SGPPPPPPPL, and APPP…PPGL. Arg307 is modified (omega-N-methylarginine). WH2 domains are found at residues 405–422 and 433–450; these read SKAA…LKKV and GRDA…LKSV. Ser484 and Ser485 each carry phosphoserine. Over residues 486 to 505 the composition is skewed to acidic residues; it reads DEDEDEDDDEDFEDDDEWED.

Binds actin and the Arp2/3 complex. Interacts with CDC42. Interacts with FCHSD1. Interacts with FCHSD2. Binds to SH3 domains of GRB2. Interacts with the C-terminal SH3 domain of DNMBP. Interacts with SNX9. Interacts with the WW domains of PRPF40A/FBP11. Interacts with PTK2/FAK1. Interacts with PACSIN1, PACSIN2 and PACSIN3. Interacts with NOSTRIN. Binds to TNK2. Interacts with SNX33. Interacts with NONO (via second RRM domain); the interaction is direct. Component of a multiprotein complex with NONO and SFPQ; associates with the complex via direct interaction with NONO. Post-translationally, phosphorylation at Ser-242, Tyr-256, Ser-484 and Ser-485 enhances actin polymerization activity.

It is found in the cytoplasm. The protein localises to the cytoskeleton. Its subcellular location is the nucleus. Regulates actin polymerization by stimulating the actin-nucleating activity of the Arp2/3 complex. Involved in various processes, such as mitosis and cytokinesis, via its role in the regulation of actin polymerization. Together with CDC42, involved in the extension and maintenance of the formation of thin, actin-rich surface projections called filopodia. In addition to its role in the cytoplasm, also plays a role in the nucleus by regulating gene transcription, probably by promoting nuclear actin polymerization. Binds to HSF1/HSTF1 and forms a complex on heat shock promoter elements (HSE) that negatively regulates HSP90 expression. Plays a role in dendrite spine morphogenesis. This is Actin nucleation-promoting factor WASL (WASL) from Bos taurus (Bovine).